Here is a 608-residue protein sequence, read N- to C-terminus: Fatty acid amide hydrolase (608 aa).

Active-site charge relay system residues include K206 and S282. Residue 303-306 coordinates substrate; that stretch reads GGGS. Residue S306 is the Acyl-ester intermediate of the active site.

It belongs to the amidase family. As to quaternary structure, forms homodimers.

It is found in the endoplasmic reticulum membrane. It localises to the cell membrane. The catalysed reaction is N-(9Z,12Z-octadecadienoyl)-ethanolamine + H2O = ethanolamine + (9Z,12Z)-octadecadienoate. It catalyses the reaction N-hexadecanoylethanolamine + H2O = ethanolamine + hexadecanoate. It carries out the reaction N-dodecanoylethanolamine + H2O = dodecanoate + ethanolamine. Inhibited by methyl arachidonyl fluorophosphonate (MAFP). Catalyzes the hydrolysis of bioactive endogenous fatty acid amides to their corresponding acids. The hydrolysis of endogenous amidated lipids terminates their participation as lipid mediators in various signaling systems. Converts a wide range of N-acylethanolamines (NAEs) to their corresponding free fatty acids and ethanolamine. The polypeptide is Fatty acid amide hydrolase (Oryza sativa subsp. japonica (Rice)).